Consider the following 101-residue polypeptide: Small ribosomal subunit protein bS6 (101 aa).

It belongs to the bacterial ribosomal protein bS6 family.

In terms of biological role, binds together with bS18 to 16S ribosomal RNA. The polypeptide is Small ribosomal subunit protein bS6 (Pseudarthrobacter chlorophenolicus (strain ATCC 700700 / DSM 12829 / CIP 107037 / JCM 12360 / KCTC 9906 / NCIMB 13794 / A6) (Arthrobacter chlorophenolicus)).